The following is a 389-amino-acid chain: Phospho-N-acetylmuramoyl-pentapeptide-transferase (389 aa).

A run of 10 helical transmembrane segments spans residues 21 to 41 (FITF…LVTG), 70 to 90 (GTPT…TLLW), 97 to 117 (FIWV…VDDY), 134 to 154 (YMWQ…SVSA), 189 to 209 (TISY…VIVG), 222 to 242 (GLAI…AYLT), 259 to 279 (AGEL…FLWF), 286 to 306 (VFMG…IAVI), 311 to 331 (VVLF…MLQV), and 366 to 386 (QVVV…LSTL).

The protein belongs to the glycosyltransferase 4 family. MraY subfamily. Requires Mg(2+) as cofactor.

The protein resides in the cell inner membrane. It catalyses the reaction UDP-N-acetyl-alpha-D-muramoyl-L-alanyl-gamma-D-glutamyl-meso-2,6-diaminopimeloyl-D-alanyl-D-alanine + di-trans,octa-cis-undecaprenyl phosphate = di-trans,octa-cis-undecaprenyl diphospho-N-acetyl-alpha-D-muramoyl-L-alanyl-D-glutamyl-meso-2,6-diaminopimeloyl-D-alanyl-D-alanine + UMP. It participates in cell wall biogenesis; peptidoglycan biosynthesis. Functionally, catalyzes the initial step of the lipid cycle reactions in the biosynthesis of the cell wall peptidoglycan: transfers peptidoglycan precursor phospho-MurNAc-pentapeptide from UDP-MurNAc-pentapeptide onto the lipid carrier undecaprenyl phosphate, yielding undecaprenyl-pyrophosphoryl-MurNAc-pentapeptide, known as lipid I. The protein is Phospho-N-acetylmuramoyl-pentapeptide-transferase of Janthinobacterium sp. (strain Marseille) (Minibacterium massiliensis).